The chain runs to 581 residues: MSSPAGRRKKKGSGGASPAPARPPPPAAVPAPAAGPAPAPGSPHKRNLYYFSYPLVVGFALLRLLACHLGLLFVWLCQRFSRALMAAKRSSGTAPAPASPSTPAPGPGGEAESVRVFHKQAFEYISIALRIDEEEKGQKEQAVEWYKKGIEELEKGIAVIVTGQGEQYERARRLQAKMMTNLVMAKDRLQLLESGAVPKKKDPLTHASNSLPRSKTVMKSGSTGLSGHHRAPSCSGLSMVSGARPGSGPAATTHKGTSKPNRTNKPSTPTTAVRKKKDLKNFRNVDSNLANLIMNEIVDNGTAVKFDDIAGQELAKQALQEIVILPSLRPELFTGLRAPARGLLLFGPPGNGKTMLAKAVAAESNATFFNISAASLTSKYVGEGEKLVRALFAVARELQPSIIFIDEVDSLLCERREGEHDASRRLKTEFLIEFDGVQSAGDDRVLVMGATNRPQELDEAVLRRFIKRVYVSLPNEETRLLLLKNLLCKQGSPLTQKELAQLARMTDGYSGSDLTALAKDAALGPIRELKPEQVKNMSASEMRNIRLSDFTESLKKIKRSVSPQTLEAYIRWNKDFGDTTV.

Positions 1–12 are enriched in basic residues; sequence MSSPAGRRKKKG. The segment at 1-39 is disordered; the sequence is MSSPAGRRKKKGSGGASPAPARPPPPAAVPAPAAGPAPA. Residues 1–48 are required for nuclear localization; it reads MSSPAGRRKKKGSGGASPAPARPPPPAAVPAPAAGPAPAPGSPHKRNL. The Cytoplasmic portion of the chain corresponds to 1-54; sequence MSSPAGRRKKKGSGGASPAPARPPPPAAVPAPAAGPAPAPGSPHKRNLYYFSYP. Positions 1-78 are required for interaction with ATL1; sequence MSSPAGRRKK…LGLLFVWLCQ (78 aa). Residues 1-191 form a required for midbody localization region; it reads MSSPAGRRKK…LVMAKDRLQL (191 aa). Positions 1-265 are required for interaction with RTN1; the sequence is MSSPAGRRKK…GTSKPNRTNK (265 aa). The short motif at 4–11 is the Nuclear localization signal element; sequence PAGRRKKK. The segment covering 20–39 has biased composition (pro residues); that stretch reads PARPPPPAAVPAPAAGPAPA. The interval 48–85 is required for interaction with SSNA1 and microtubules; that stretch reads LYYFSYPLVVGFALLRLLACHLGLLFVWLCQRFSRALM. An intramembrane region (helical) is located at residues 55 to 75; it reads LVVGFALLRLLACHLGLLFVW. Positions 57–65 match the Nuclear export signal motif; sequence VGFALLRLL. Residues 76–581 lie on the Cytoplasmic side of the membrane; the sequence is LCQRFSRALM…WNKDFGDTTV (506 aa). The segment at 90-111 is disordered; sequence SSGTAPAPASPSTPAPGPGGEA. Residues 97 to 106 are compositionally biased toward pro residues; it reads PASPSTPAPG. An MIT domain is found at 118–192; that stretch reads HKQAFEYISI…VMAKDRLQLL (75 aa). The tract at residues 193-581 is sufficient for microtubule severing; that stretch reads ESGAVPKKKD…WNKDFGDTTV (389 aa). The disordered stretch occupies residues 195-277; the sequence is GAVPKKKDPL…TPTTAVRKKK (83 aa). The span at 206–225 shows a compositional bias: polar residues; that stretch reads HASNSLPRSKTVMKSGSTGL. Phosphoserine occurs at positions 210 and 233. The interval 235-293 is required for interaction with microtubules and microtubule severing; it reads SGLSMVSGARPGSGPAATTHKGTSKPNRTNKPSTPTTAVRKKKDLKNFRNVDSNLANLI. The segment covering 254 to 271 has biased composition (polar residues); sequence HKGTSKPNRTNKPSTPTT. Thr271 is subject to Phosphothreonine. Positions 274 to 277 match the Nuclear localization signal motif; the sequence is RKKK. 347 to 354 contacts ATP; the sequence is GPPGNGKT. The residue at position 562 (Ser562) is a Phosphoserine.

The protein belongs to the AAA ATPase family. Spastin subfamily. In terms of assembly, homohexamer. Mostly monomeric, but assembles into hexameric structure for short periods of time. Oligomerization seems to be a prerequisite for catalytic activity. Binding to ATP in a cleft between two adjacent subunits stabilizes the homohexameric form. Binds to microtubules at least in part via the alpha-tubulin and beta-tubulin tails. The hexamer adopts a ring conformation through which microtubules pass prior to being severed. Does not interact strongly with tubulin heterodimers. Interacts (via MIT domain) with CHMP1B; the interaction is direct. Interacts with SSNA1. Interacts with ATL1. Interacts with RTN1. Interacts with ZFYVE27. Interacts with REEP1. Interacts (via MIT domain) with IST1.

The protein resides in the membrane. Its subcellular location is the endoplasmic reticulum. It localises to the midbody. It is found in the cytoplasm. The protein localises to the cytoskeleton. The protein resides in the microtubule organizing center. Its subcellular location is the centrosome. It localises to the perinuclear region. It is found in the nucleus. The protein localises to the spindle. The protein resides in the cell projection. Its subcellular location is the axon. The enzyme catalyses n ATP + n H2O + a microtubule = n ADP + n phosphate + (n+1) alpha/beta tubulin heterodimers.. Allosteric enzyme with a cooperative mechanism; at least two neighbor subunits influence each other strongly in spastin hexamers. Microtubule binding promotes cooperative interactions among spastin subunits. Its function is as follows. ATP-dependent microtubule severing protein that specifically recognizes and cuts microtubules that are polyglutamylated. Preferentially recognizes and acts on microtubules decorated with short polyglutamate tails: severing activity increases as the number of glutamates per tubulin rises from one to eight, but decreases beyond this glutamylation threshold. Severing activity is not dependent on tubulin acetylation or detyrosination. Microtubule severing promotes reorganization of cellular microtubule arrays and the release of microtubules from the centrosome following nucleation. It is critical for the biogenesis and maintenance of complex microtubule arrays in axons, spindles and cilia. SPAST is involved in abscission step of cytokinesis and nuclear envelope reassembly during anaphase in cooperation with the ESCRT-III complex. Recruited at the midbody, probably by IST1, and participates in membrane fission during abscission together with the ESCRT-III complex. Recruited to the nuclear membrane by IST1 and mediates microtubule severing, promoting nuclear envelope sealing and mitotic spindle disassembly during late anaphase. Required for membrane traffic from the endoplasmic reticulum (ER) to the Golgi and endosome recycling. Recruited by IST1 to endosomes and regulates early endosomal tubulation and recycling by mediating microtubule severing. Probably plays a role in axon growth and the formation of axonal branches. In Rattus norvegicus (Rat), this protein is Spastin.